Consider the following 360-residue polypeptide: Magnesium-protoporphyrin IX monomethyl ester [oxidative] cyclase (360 aa).

The segment at 1–20 (MVPPTAIAEASRSGGEPAIK) is disordered.

This sequence belongs to the AcsF family. Fe cation is required as a cofactor.

The catalysed reaction is Mg-protoporphyrin IX 13-monomethyl ester + 3 NADPH + 3 O2 + 2 H(+) = 3,8-divinyl protochlorophyllide a + 3 NADP(+) + 5 H2O. The protein operates within porphyrin-containing compound metabolism; chlorophyll biosynthesis (light-independent). Functionally, catalyzes the formation of the isocyclic ring in chlorophyll biosynthesis. Mediates the cyclase reaction, which results in the formation of divinylprotochlorophyllide (Pchlide) characteristic of all chlorophylls from magnesium-protoporphyrin IX 13-monomethyl ester (MgPMME). The sequence is that of Magnesium-protoporphyrin IX monomethyl ester [oxidative] cyclase from Synechococcus sp. (strain RCC307).